A 350-amino-acid chain; its full sequence is Protein RecA (350 aa).

67-74 is a binding site for ATP; the sequence is GPESSGKT.

It belongs to the RecA family.

The protein localises to the cytoplasm. In terms of biological role, can catalyze the hydrolysis of ATP in the presence of single-stranded DNA, the ATP-dependent uptake of single-stranded DNA by duplex DNA, and the ATP-dependent hybridization of homologous single-stranded DNAs. It interacts with LexA causing its activation and leading to its autocatalytic cleavage. The sequence is that of Protein RecA from Baumannia cicadellinicola subsp. Homalodisca coagulata.